The primary structure comprises 167 residues: N5-carboxyaminoimidazole ribonucleotide mutase (167 aa).

Positions 11, 14, and 41 each coordinate substrate.

This sequence belongs to the AIR carboxylase family. Class I subfamily.

It carries out the reaction 5-carboxyamino-1-(5-phospho-D-ribosyl)imidazole + H(+) = 5-amino-1-(5-phospho-D-ribosyl)imidazole-4-carboxylate. It functions in the pathway purine metabolism; IMP biosynthesis via de novo pathway; 5-amino-1-(5-phospho-D-ribosyl)imidazole-4-carboxylate from 5-amino-1-(5-phospho-D-ribosyl)imidazole (N5-CAIR route): step 2/2. Catalyzes the conversion of N5-carboxyaminoimidazole ribonucleotide (N5-CAIR) to 4-carboxy-5-aminoimidazole ribonucleotide (CAIR). This Aquifex aeolicus (strain VF5) protein is N5-carboxyaminoimidazole ribonucleotide mutase.